The chain runs to 380 residues: Magnesium-protoporphyrin IX monomethyl ester [oxidative] cyclase 1 (380 aa).

It belongs to the AcsF family. Requires Fe cation as cofactor.

The catalysed reaction is Mg-protoporphyrin IX 13-monomethyl ester + 3 NADPH + 3 O2 + 2 H(+) = 3,8-divinyl protochlorophyllide a + 3 NADP(+) + 5 H2O. It functions in the pathway porphyrin-containing compound metabolism; chlorophyll biosynthesis (light-independent). In terms of biological role, catalyzes the formation of the isocyclic ring in chlorophyll biosynthesis. Mediates the cyclase reaction, which results in the formation of divinylprotochlorophyllide (Pchlide) characteristic of all chlorophylls from magnesium-protoporphyrin IX 13-monomethyl ester (MgPMME). The polypeptide is Magnesium-protoporphyrin IX monomethyl ester [oxidative] cyclase 1 (Thermosynechococcus vestitus (strain NIES-2133 / IAM M-273 / BP-1)).